We begin with the raw amino-acid sequence, 348 residues long: Histidinol-phosphate aminotransferase (348 aa).

Lys-211 carries the N6-(pyridoxal phosphate)lysine modification.

This sequence belongs to the class-II pyridoxal-phosphate-dependent aminotransferase family. Histidinol-phosphate aminotransferase subfamily. In terms of assembly, homodimer. It depends on pyridoxal 5'-phosphate as a cofactor.

The enzyme catalyses L-histidinol phosphate + 2-oxoglutarate = 3-(imidazol-4-yl)-2-oxopropyl phosphate + L-glutamate. The protein operates within amino-acid biosynthesis; L-histidine biosynthesis; L-histidine from 5-phospho-alpha-D-ribose 1-diphosphate: step 7/9. The protein is Histidinol-phosphate aminotransferase of Pseudomonas entomophila (strain L48).